Consider the following 396-residue polypeptide: MTENLIIHVDMDAFYASVELLDNPELRGQCVIVGGASNRGVVCSASYEARALGVRSAMPIVTARKLCPRGVFLPVRRARYQEISRKVFEIFHQYTPLVEPISLDEAFMDVTSSTRLFGSGEEIAANIRRQIESSLGITASAGIAKNKLVAKIASDLCKPNGLLVVPADQTQEFLDPLPISRLWGVGPASRNKLISLGVKTIRDVRKLTQEMLSANFGRNGEVIYAFARGMDDRPVEPPGAAKSIGREITFDRNVYTLEEAYKWMLFLSERVARRMRKEEATGRTVNIKVKYADFIQVTRSVTLESPTDDPGEIYTHAKKLLQKTLVGSKAVRLLGVTLSQLVTPGQAWQPGLFDDPTASERKRKLNQALDGIWDRFGSGTVEPAALVTDVAKHNLR.

Residues 6–186 (IIHVDMDAFY…LPISRLWGVG (181 aa)) form the UmuC domain. Positions 10 and 104 each coordinate Mg(2+). Glu-105 is an active-site residue.

This sequence belongs to the DNA polymerase type-Y family. As to quaternary structure, monomer. Requires Mg(2+) as cofactor.

The protein localises to the cytoplasm. The enzyme catalyses DNA(n) + a 2'-deoxyribonucleoside 5'-triphosphate = DNA(n+1) + diphosphate. Functionally, poorly processive, error-prone DNA polymerase involved in untargeted mutagenesis. Copies undamaged DNA at stalled replication forks, which arise in vivo from mismatched or misaligned primer ends. These misaligned primers can be extended by PolIV. Exhibits no 3'-5' exonuclease (proofreading) activity. May be involved in translesional synthesis, in conjunction with the beta clamp from PolIII. The protein is DNA polymerase IV of Desulfatibacillum aliphaticivorans.